A 161-amino-acid chain; its full sequence is Cytidylate kinase (161 aa).

Position 7–15 (7–15 (GLAGTGTTT)) interacts with ATP.

Belongs to the cytidylate kinase family. Type 2 subfamily.

Its subcellular location is the cytoplasm. It carries out the reaction CMP + ATP = CDP + ADP. It catalyses the reaction dCMP + ATP = dCDP + ADP. This chain is Cytidylate kinase (cmk), found in Methanothermobacter thermautotrophicus (strain ATCC 29096 / DSM 1053 / JCM 10044 / NBRC 100330 / Delta H) (Methanobacterium thermoautotrophicum).